The chain runs to 423 residues: Putative serpin-Z12 (423 aa).

The segment at 1–25 (MAALAAGEPFSGRATGGDGGVRSDV) is disordered. Positions 370 to 394 (GTVAAASTAVVMMQKGSSLPPVDFV) are RCL.

Belongs to the serpin family.

Functionally, probable serine protease inhibitor. The protein is Putative serpin-Z12 of Oryza sativa subsp. japonica (Rice).